Here is a 299-residue protein sequence, read N- to C-terminus: Cuticle collagen 34 (299 aa).

The segment at 105–282 is disordered; sequence PGPAGTPGKP…GSPGERGICP (178 aa). Positions 129–162 are enriched in pro residues; sequence PGRPPQQPCEPITPPPCKPCPQGPPGPPGPPGPP. Over residues 164–181 the composition is skewed to low complexity; the sequence is DSGEPGSPGLPGQDAAPG. Pro residues-rich tracts occupy residues 182–195 and 215–233; these read EPGP…PGAP and PGEP…PGSP. The segment at 216–278 is triple-helical region; sequence GEPGPPGEAG…AGPPGSPGER (63 aa). Residues 251–263 show a composition bias toward low complexity; the sequence is NGPDGQPGADGNP. Residues 265 to 274 are compositionally biased toward pro residues; it reads APGPAGPPGS.

This sequence belongs to the cuticular collagen family. In terms of assembly, collagen polypeptide chains are complexed within the cuticle by disulfide bonds and other types of covalent cross-links.

Functionally, nematode cuticles are composed largely of collagen-like proteins. The cuticle functions both as an exoskeleton and as a barrier to protect the worm from its environment. The polypeptide is Cuticle collagen 34 (col-34) (Caenorhabditis elegans).